The sequence spans 1132 residues: Phycobiliprotein ApcE (1132 aa).

Cys196 serves as a coordination point for (2R,3E)-phycocyanobilin. 4 consecutive PBS-linker domains span residues 253 to 433, 514 to 692, 709 to 887, and 940 to 1121; these read DQQG…FRKV, LGPK…EKQE, PDID…KQNN, and GRGQ…SSLS.

Belongs to the phycobilisome linker protein family. As to quaternary structure, heterodimer of ApcF (a variant beta-allophycocyanin). Phycobilisomes of this organism are composed of a two cylinder core, from which six rods radiate. The core is mainly composed of allophycocyanin alpha and beta chains and of minor components. Post-translationally, contains one covalently linked bilin chromophore. This protein autochromophorylates.

The protein localises to the cellular thylakoid membrane. Its function is as follows. This protein is postulated to act both as terminal energy acceptor (by its phycobilin-like domains) and as a linker polypeptide (by its repeats and arms) that stabilizes the phycobilisome core architecture. Has intrinsic bilin lyase activity. In Nostoc sp. (strain PCC 7120 / SAG 25.82 / UTEX 2576), this protein is Phycobiliprotein ApcE (apcE).